Reading from the N-terminus, the 213-residue chain is Retinitis pigmentosa 9 protein homolog (213 aa).

The segment at 1-61 (MSSGAGSRRP…IKEDETKPED (61 aa)) is disordered. Residues 1–147 (MSSGAGSRRP…RENKRHEKDV (147 aa)) form a PIM1-binding region. Composition is skewed to basic and acidic residues over residues 9–21 (RPRE…LQRR) and 52–61 (IKEDETKPED). Residues 96–114 (QCWRCKRYGHRTGDKECPF) form a CCHC-type zinc finger. A Glycyl lysine isopeptide (Lys-Gly) (interchain with G-Cter in SUMO2) cross-link involves residue Lys121. The disordered stretch occupies residues 154-213 (QLLEDSTSDDDGSSSSSSGDREKRKKRKKKEKHKKRKKEKKKKKKRKHKASKSSESSDSE). The segment covering 176–204 (KRKKRKKKEKHKKRKKEKKKKKKRKHKAS) has biased composition (basic residues). 2 positions are modified to phosphoserine; by PIM1; in vitro: Ser204 and Ser206.

Binds to PIM1. Binds to ZNHIT4. In terms of tissue distribution, highly expressed in the testis, moderately in the kidney, liver and spleen, and weakly in the skeletal muscle and heart.

It localises to the nucleus. Its function is as follows. Is thought to be a target protein for the PIM1 kinase. May play some roles in B-cell proliferation in association with PIM1. The chain is Retinitis pigmentosa 9 protein homolog (rp9) from Mus musculus (Mouse).